A 209-amino-acid polypeptide reads, in one-letter code: Neurotrophin-4 (209 aa).

The first 21 residues, 1–21 (MLPRHSCSLLLFLLLLPSVPM), serve as a signal peptide directing secretion. The propeptide occupies 22–79 (EPQPPSSTLPPFLAPEWDLLSPRVALSRGTPAGPPLLFLLEAGAYGEPAGAPANRSRR). Asn-75 is a glycosylation site (N-linked (GlcNAc...) asparagine). Disulfide bonds link Cys-96–Cys-169, Cys-140–Cys-198, and Cys-157–Cys-200.

It belongs to the NGF-beta family. In terms of tissue distribution, expressed in thymus, muscle, ovary, brain, heart, stomach and kidney. Expressed in both embryo and adult tissues.

The protein resides in the secreted. Functionally, target-derived survival factor for peripheral sensory sympathetic neurons. May promote ameloblast differentiation and subsequent reduction in proliferation of ameloblasts. The protein is Neurotrophin-4 (Ntf4) of Rattus norvegicus (Rat).